The primary structure comprises 537 residues: Zinc finger and BTB domain-containing protein 18 (537 aa).

The 68-residue stretch at cysteine 24–serine 91 folds into the BTB domain. Residues threonine 122 to serine 143 show a composition bias toward basic and acidic residues. 2 disordered regions span residues threonine 122–alanine 232 and alanine 335–aspartate 355. Composition is skewed to low complexity over residues arginine 182–proline 195 and serine 208–arginine 229. C2H2-type zinc fingers lie at residues phenylalanine 385–histidine 407, proline 425–histidine 447, tyrosine 453–histidine 475, and histidine 481–histidine 504.

It belongs to the krueppel C2H2-type zinc-finger protein family. ZBTB18 subfamily.

Its subcellular location is the nucleus. Functionally, transcriptional repressor that plays a role in various developmental processes. Specifically binds the consensus DNA sequence 5'-[AC]ACATCTG[GT][AC]-3' which contains the E box core, and acts by recruiting chromatin remodeling multiprotein complexes. This chain is Zinc finger and BTB domain-containing protein 18 (zbtb18), found in Danio rerio (Zebrafish).